The primary structure comprises 459 residues: Limonoid 7-O-acetyltransferse (459 aa).

Residues His-167 and Asp-391 each act as proton acceptor in the active site.

It belongs to the plant acyltransferase family. In terms of assembly, monomer. Expressed in maturing fruits and in juice vesicles.

It carries out the reaction (1S)-1-acetoxy-luvungin A + acetyl-CoA = (1S)-1,7-diacetoxy-luvungin A + CoA. It participates in secondary metabolite biosynthesis; terpenoid biosynthesis. In terms of biological role, acetyltransferase involved in the biosynthesis of limonoids triterpene natural products such as limonin, a compound with insecticidal activity responsible for the bitter taste in citrus. Catalyzes the formation of (1S)-1,7-diacetoxy-luvungin A from (1S)-1-acetoxy-luvungin A. The chain is Limonoid 7-O-acetyltransferse from Citrus sinensis (Sweet orange).